The chain runs to 325 residues: Beta-ketoacyl-[acyl-carrier-protein] synthase III (325 aa).

Catalysis depends on residues Cys119 and His252. An ACP-binding region spans residues 253-257; that stretch reads QANLR. Residue Asn282 is part of the active site.

The protein belongs to the thiolase-like superfamily. FabH family. As to quaternary structure, homodimer.

It localises to the cytoplasm. The catalysed reaction is malonyl-[ACP] + acetyl-CoA + H(+) = 3-oxobutanoyl-[ACP] + CO2 + CoA. It participates in lipid metabolism; fatty acid biosynthesis. Functionally, catalyzes the condensation reaction of fatty acid synthesis by the addition to an acyl acceptor of two carbons from malonyl-ACP. Catalyzes the first condensation reaction which initiates fatty acid synthesis and may therefore play a role in governing the total rate of fatty acid production. Possesses both acetoacetyl-ACP synthase and acetyl transacylase activities. Its substrate specificity determines the biosynthesis of branched-chain and/or straight-chain of fatty acids. This chain is Beta-ketoacyl-[acyl-carrier-protein] synthase III, found in Polaromonas naphthalenivorans (strain CJ2).